A 666-amino-acid chain; its full sequence is NADH-ubiquinone oxidoreductase chain 5 (666 aa).

The next 17 membrane-spanning stretches (helical) occupy residues 3-23 (LLIL…GRWL), 31-51 (FSTL…FEIG), 59-78 (IFLV…GFLF), 82-101 (TVTM…IYSI), 119-139 (IFTF…MFLG), 168-190 (LIVN…WVFN), 211-231 (FLGF…IGAI), 251-271 (TPVS…FLMI), 283-303 (ILFI…VTGV), 311-333 (VIAY…SCYD), 337-357 (FHLA…GSVI), 375-395 (FMPL…GFPF), 421-441 (YISF…FYSF), 467-487 (LLMI…GYLI), 524-544 (WLPF…QIFL), 572-594 (VLYN…FKIL), and 629-649 (YLFF…YSYI).

The protein belongs to the complex I subunit 5 family.

The protein resides in the mitochondrion inner membrane. The catalysed reaction is a ubiquinone + NADH + 5 H(+)(in) = a ubiquinol + NAD(+) + 4 H(+)(out). Its function is as follows. Core subunit of the mitochondrial membrane respiratory chain NADH dehydrogenase (Complex I) that is believed to belong to the minimal assembly required for catalysis. Complex I functions in the transfer of electrons from NADH to the respiratory chain. The immediate electron acceptor for the enzyme is believed to be ubiquinone. The polypeptide is NADH-ubiquinone oxidoreductase chain 5 (ND5) (Chondrus crispus (Carrageen Irish moss)).